The sequence spans 546 residues: ATP synthase F(1) complex catalytic subunit beta, mitochondrial (546 aa).

The transit peptide at 1-45 (MLGFVGRVAATSASGALRGLGPSPLPQVKVLLRASPAALQSARDY) directs the protein to the mitochondrion. Residues lysine 123, lysine 132, and lysine 160 each carry the N6-acetyllysine; alternate modification. N6-succinyllysine; alternate is present on residues lysine 123, lysine 132, and lysine 160. The residue at position 197 (lysine 197) is an N6-acetyllysine. ADP-binding residues include glycine 208, valine 209, glycine 210, lysine 211, threonine 212, and valine 213. Glycine 208 lines the ATP pocket. Phosphate contacts are provided by glycine 208, valine 209, glycine 210, lysine 211, and threonine 212. Residues glycine 210, lysine 211, threonine 212, and valine 213 each contribute to the ATP site. Threonine 212 serves as a coordination point for Mg(2+). Glutamate 237 contacts Mg(2+). Residue arginine 238 participates in ATP binding. Residues lysine 258 and lysine 263 each carry the N6-acetyllysine; alternate modification. N6-succinyllysine; alternate occurs at positions 258 and 263. At threonine 311 the chain carries Phosphothreonine. Lysine 425 bears the N6-acetyllysine mark. The residue at position 432 (serine 432) is a Phosphoserine. N6-acetyllysine occurs at positions 479 and 484. Lysine 521 is modified (N6-acetyllysine; alternate). N6-succinyllysine; alternate is present on lysine 521. The segment at 521 to 546 (KLAEEHSATQTSPSPKGAAAXXXRVV) is disordered.

This sequence belongs to the ATPase alpha/beta chains family. Homotrimer. Component of the ATP synthase complex composed at least of ATP5F1A/subunit alpha, ATP5F1B/subunit beta, ATP5MC1/subunit c (homooctomer), MT-ATP6/subunit a, MT-ATP8/subunit 8, ATP5ME/subunit e, ATP5MF/subunit f, ATP5MG/subunit g, ATP5MK/subunit k, ATP5MJ/subunit j, ATP5F1C/subunit gamma, ATP5F1D/subunit delta, ATP5F1E/subunit epsilon, ATP5PF/subunit F6, ATP5PB/subunit b, ATP5PD/subunit d, ATP5PO/subunit OSCP. ATP synthase complex consists of a soluble F(1) head domain (subunits alpha(3) and beta(3)) - the catalytic core - and a membrane F(0) domain - the membrane proton channel (subunits c, a, 8, e, f, g, k and j). These two domains are linked by a central stalk (subunits gamma, delta, and epsilon) rotating inside the F1 region and a stationary peripheral stalk (subunits F6, b, d, and OSCP). Interacts with PPIF. Interacts with BCL2L1 isoform BCL-X(L); the interaction mediates the association of BCL2L1 isoform BCL-X(L) with the mitochondrial membrane F(1)F(0) ATP synthase and enhances neurons metabolic efficiency. Interacts with CLN5 and PPT1. Interacts with S100A1; this interaction increases F1-ATPase activity. Interacts with MTLN. Interacts with TTC5/STRAP; the interaction results in decreased mitochondrial ATP production.

Its subcellular location is the mitochondrion inner membrane. It catalyses the reaction ATP + H2O + 4 H(+)(in) = ADP + phosphate + 5 H(+)(out). In terms of biological role, catalytic subunit beta, of the mitochondrial membrane ATP synthase complex (F(1)F(0) ATP synthase or Complex V) that produces ATP from ADP in the presence of a proton gradient across the membrane which is generated by electron transport complexes of the respiratory chain. ATP synthase complex consist of a soluble F(1) head domain - the catalytic core - and a membrane F(1) domain - the membrane proton channel. These two domains are linked by a central stalk rotating inside the F(1) region and a stationary peripheral stalk. During catalysis, ATP synthesis in the catalytic domain of F(1) is coupled via a rotary mechanism of the central stalk subunits to proton translocation. In vivo, can only synthesize ATP although its ATP hydrolase activity can be activated artificially in vitro. With the subunit alpha (ATP5F1A), forms the catalytic core in the F(1) domain. This chain is ATP synthase F(1) complex catalytic subunit beta, mitochondrial, found in Canis lupus familiaris (Dog).